The sequence spans 1508 residues: Vacuolar protein sorting/targeting protein 10 (1508 aa).

Residues 1-20 (MVGMLFVWQTFLFVWACAAA) form the signal peptide. Residues 21-1348 (VEVGEKPRPV…EKYPSSTNAS (1328 aa)) are Lumenal-facing. Residues 164 to 172 (WVSQDGGKT) form a BNR 1 repeat. Asn353 carries an N-linked (GlcNAc...) asparagine glycan. BNR repeat units lie at residues 372–381 (LSYDYGYSWQ), 452–461 (ISRDYGLTWS), 497–507 (YYSLDQGHTWE), and 717–726 (ISHDSGKTFK). Asn789 carries N-linked (GlcNAc...) asparagine glycosylation. The BNR 6 repeat unit spans residues 812-822 (YITTDGGRNFR). N-linked (GlcNAc...) asparagine glycosylation occurs at Asn911. 2 BNR repeats span residues 1095-1105 (FLTTDGGVTWT) and 1137-1146 (YSVDAGRSWQ). N-linked (GlcNAc...) asparagine glycosylation is found at Asn1243 and Asn1346. The chain crosses the membrane as a helical span at residues 1349-1369 (SVVFWWLLLTMVLLVPLWVIY). The Cytoplasmic portion of the chain corresponds to 1370–1404 (DRGIRRNGGFSRFGEIRLDDDDLIEENGLDRAINK). The helical transmembrane segment at 1405-1425 (VVKVGAYGVAGLFGFLLLLKS) threads the bilayer. The Lumenal segment spans residues 1426–1508 (KAGARIRRFR…DDVDLGRTSE (83 aa)).

Belongs to the VPS10-related sortilin family.

The protein resides in the golgi apparatus. It is found in the trans-Golgi network membrane. It localises to the prevacuolar compartment membrane. Functions as a sorting receptor in the Golgi compartment required for the intracellular sorting and delivery of soluble vacuolar proteins, like carboxypeptidase Y (CPY) and proteinase A. Executes multiple rounds of sorting by cycling between the late Golgi and a prevacuolar endosome-like compartment. In Eremothecium gossypii (strain ATCC 10895 / CBS 109.51 / FGSC 9923 / NRRL Y-1056) (Yeast), this protein is Vacuolar protein sorting/targeting protein 10 (VPS10).